The sequence spans 550 residues: Medium/long-chain-fatty-acid--CoA/3-oxocholest-4-en-26-oate--CoA ligase (550 aa).

ATP is bound by residues 178–186, Asp-419, Arg-434, and Lys-525; that span reads TGGTTGFPK. Positions 525 to 550 are disordered; that stretch reads KPDYRWAKEQTEARPADDVHAAHVSA.

It belongs to the ATP-dependent AMP-binding enzyme family.

The catalysed reaction is a medium-chain fatty acid + ATP + CoA = a medium-chain fatty acyl-CoA + AMP + diphosphate. It catalyses the reaction a long-chain fatty acid + ATP + CoA = a long-chain fatty acyl-CoA + AMP + diphosphate. It carries out the reaction (25S)-3-oxocholest-4-en-26-oate + ATP + CoA = (25S)-3-oxocholest-4-en-26-oyl-CoA + AMP + diphosphate. Its pathway is lipid metabolism; fatty acid biosynthesis. It functions in the pathway steroid metabolism; cholesterol metabolism. Its function is as follows. Catalyzes the activation of medium/long-chain fatty acids as acyl-coenzyme A (acyl-CoA), which are then transferred to the multifunctional polyketide synthase (PKS) type III for further chain extension. Also involved in the degradation of cholesterol via the degradation of the side chains of C-24 branched-chain sterols. Catalyzes the ATP-dependent CoA thioesterification of the sterol 3-oxocholest-4-en-26-oate to yield 3-oxocholest-4-en-26-oyl-CoA. The sequence is that of Medium/long-chain-fatty-acid--CoA/3-oxocholest-4-en-26-oate--CoA ligase from Mycobacterium marinum (strain ATCC BAA-535 / M).